The following is a 362-amino-acid chain: Glucuronokinase 1 (362 aa).

126 to 136 (PRQTGLSGSSA) lines the ATP pocket. Catalysis depends on Asp-179, which acts as the Proton acceptor.

It belongs to the GHMP kinase family. Mg(2+) serves as cofactor. Mn(2+) is required as a cofactor. The cofactor is Co(2+). Highly expressed in pollen. Detected in seedlings, inflorescences, seeds, leaves and roots.

The catalysed reaction is D-glucuronate + ATP = 1-phospho-alpha-D-glucuronate + ADP + H(+). Functionally, sugar-1-kinase with a strict substrate specificity for D-glucuronic acid and ATP. Involved in the biosynthesis of UDP-glucuronic acid (UDP-GlcA), providing nucleotide sugars for cell-wall polymers. May be also involved in a salvage pathway for glucuronic acid. The protein is Glucuronokinase 1 (GLCAK1) of Arabidopsis thaliana (Mouse-ear cress).